Here is a 235-residue protein sequence, read N- to C-terminus: Proteasome subunit alpha type-2-B (235 aa).

Lysine 64 is covalently cross-linked (Glycyl lysine isopeptide (Lys-Gly) (interchain with G-Cter in ubiquitin)).

It belongs to the peptidase T1A family. As to quaternary structure, component of the 20S core complex of the 26S proteasome. The 26S proteasome is composed of a core protease (CP), known as the 20S proteasome, capped at one or both ends by the 19S regulatory particle (RP/PA700). The 20S proteasome core is composed of 28 subunits that are arranged in four stacked rings, resulting in a barrel-shaped structure. The two end rings are each formed by seven alpha subunits, and the two central rings are each formed by seven beta subunits. The catalytic chamber with the active sites is on the inside of the barrel.

The protein resides in the cytoplasm. The protein localises to the nucleus. Functionally, the proteasome is a multicatalytic proteinase complex which is characterized by its ability to cleave peptides with Arg, Phe, Tyr, Leu, and Glu adjacent to the leaving group at neutral or slightly basic pH. The proteasome has an ATP-dependent proteolytic activity. This is Proteasome subunit alpha type-2-B (PAB2) from Arabidopsis thaliana (Mouse-ear cress).